Here is a 171-residue protein sequence, read N- to C-terminus: Peptide deformylase 1 (171 aa).

Fe cation contacts are provided by cysteine 99 and histidine 141. Glutamate 142 is an active-site residue.

The protein belongs to the polypeptide deformylase family. Fe(2+) is required as a cofactor.

It carries out the reaction N-terminal N-formyl-L-methionyl-[peptide] + H2O = N-terminal L-methionyl-[peptide] + formate. Removes the formyl group from the N-terminal Met of newly synthesized proteins. Requires at least a dipeptide for an efficient rate of reaction. N-terminal L-methionine is a prerequisite for activity but the enzyme has broad specificity at other positions. The sequence is that of Peptide deformylase 1 from Xanthomonas axonopodis pv. citri (strain 306).